The chain runs to 310 residues: tRNA-cytidine(32) 2-sulfurtransferase (310 aa).

The PP-loop motif motif lies at 47–52 (SGGKDS). [4Fe-4S] cluster is bound by residues Cys122, Cys125, and Cys213.

It belongs to the TtcA family. As to quaternary structure, homodimer. Mg(2+) is required as a cofactor. Requires [4Fe-4S] cluster as cofactor.

It is found in the cytoplasm. The enzyme catalyses cytidine(32) in tRNA + S-sulfanyl-L-cysteinyl-[cysteine desulfurase] + AH2 + ATP = 2-thiocytidine(32) in tRNA + L-cysteinyl-[cysteine desulfurase] + A + AMP + diphosphate + H(+). It functions in the pathway tRNA modification. Catalyzes the ATP-dependent 2-thiolation of cytidine in position 32 of tRNA, to form 2-thiocytidine (s(2)C32). The sulfur atoms are provided by the cysteine/cysteine desulfurase (IscS) system. This Haemophilus influenzae (strain PittEE) protein is tRNA-cytidine(32) 2-sulfurtransferase.